A 477-amino-acid polypeptide reads, in one-letter code: Chaperonin GroEL 2 (477 aa).

ATP contacts are provided by residues T29–P32, D86–T90, and G416.

Belongs to the chaperonin (HSP60) family. As to quaternary structure, forms a cylinder of 14 subunits composed of two heptameric rings stacked back-to-back. Interacts with the co-chaperonin GroES.

The protein resides in the cytoplasm. It catalyses the reaction ATP + H2O + a folded polypeptide = ADP + phosphate + an unfolded polypeptide.. Its function is as follows. Together with its co-chaperonin GroES, plays an essential role in assisting protein folding. The GroEL-GroES system forms a nano-cage that allows encapsulation of the non-native substrate proteins and provides a physical environment optimized to promote and accelerate protein folding. The sequence is that of Chaperonin GroEL 2 from Streptomyces lividans.